Here is a 37-residue protein sequence, read N- to C-terminus: Large ribosomal subunit protein bL36c (37 aa).

The protein belongs to the bacterial ribosomal protein bL36 family.

It is found in the plastid. Its subcellular location is the chloroplast. The protein is Large ribosomal subunit protein bL36c of Acorus calamus (Sweet flag).